The following is a 130-amino-acid chain: Small ribosomal subunit protein uS9 (130 aa).

It belongs to the universal ribosomal protein uS9 family.

In Vibrio campbellii (strain ATCC BAA-1116), this protein is Small ribosomal subunit protein uS9.